A 323-amino-acid chain; its full sequence is Prostaglandin-E(2) 9-reductase (323 aa).

NADP(+)-binding positions include 23–24 (TY) and Asp50. Residue Tyr24 participates in substrate binding. Tyr55 acts as the Proton donor in catalysis. His117 contacts substrate. NADP(+)-binding positions include 166–167 (SN), Gln190, 216–221 (YSALGS), and 270–280 (KSFTEKRIKEN).

Belongs to the aldo/keto reductase family.

It is found in the cytoplasm. It catalyses the reaction prostaglandin F2alpha + NADP(+) = prostaglandin E2 + NADPH + H(+). The enzyme catalyses (17R,20S)-17,20-dihydroxypregn-4-en-3-one + NADP(+) = 17alpha-hydroxyprogesterone + NADPH + H(+). The catalysed reaction is (17R,20S)-17,20-dihydroxypregn-4-en-3-one + NAD(+) = 17alpha-hydroxyprogesterone + NADH + H(+). Functionally, can convert prostaglandin E2 to prostaglandin F2-alpha. The protein is Prostaglandin-E(2) 9-reductase (AKR1C5) of Oryctolagus cuniculus (Rabbit).